Reading from the N-terminus, the 132-residue chain is Myelin P2 protein (132 aa).

Position 2 is an N-acetylserine (serine 2). Arginine 107 is a binding site for (9Z)-octadecenoate. Arginine 107 serves as a coordination point for hexadecanoate. Cysteine 118 and cysteine 125 are oxidised to a cystine. 127 to 129 provides a ligand contact to (9Z)-octadecenoate; the sequence is RIY. A hexadecanoate-binding site is contributed by 127–129; sequence RIY.

The protein belongs to the calycin superfamily. Fatty-acid binding protein (FABP) family. In terms of assembly, monomer.

It is found in the cytoplasm. May play a role in lipid transport protein in Schwann cells. May bind cholesterol. The sequence is that of Myelin P2 protein (PMP2) from Bos taurus (Bovine).